Here is a 238-residue protein sequence, read N- to C-terminus: Histone H1 (238 aa).

Composition is skewed to low complexity over residues 21 to 34 (AAVD…AKAP) and 123 to 132 (AKAPAAVKPK). Disordered regions lie at residues 21–57 (AAVD…AHPS) and 123–238 (AKAP…KAKK). One can recognise an H15 domain in the interval 54–124 (AHPSYAEMVS…KVKGSYKLAK (71 aa)). Positions 133 to 197 (TATKKKPAAK…AAKPKAKAAA (65 aa)) are enriched in basic residues. Low complexity-rich tracts occupy residues 198-208 (KKAPAAATPKK) and 217-230 (KRAT…PAKK).

The protein belongs to the histone H1/H5 family.

The protein resides in the nucleus. It is found in the chromosome. Its function is as follows. Histones H1 are necessary for the condensation of nucleosome chains into higher-order structures. This is Histone H1 from Triticum aestivum (Wheat).